Consider the following 190-residue polypeptide: Xanthine phosphoribosyltransferase (190 aa).

Xanthine contacts are provided by L20 and N27. A 5-phospho-alpha-D-ribose 1-diphosphate-binding site is contributed by 128–132 (ANGHA). A xanthine-binding site is contributed by K156.

Belongs to the purine/pyrimidine phosphoribosyltransferase family. Xpt subfamily. In terms of assembly, homodimer.

The protein resides in the cytoplasm. The enzyme catalyses XMP + diphosphate = xanthine + 5-phospho-alpha-D-ribose 1-diphosphate. Its pathway is purine metabolism; XMP biosynthesis via salvage pathway; XMP from xanthine: step 1/1. Converts the preformed base xanthine, a product of nucleic acid breakdown, to xanthosine 5'-monophosphate (XMP), so it can be reused for RNA or DNA synthesis. The chain is Xanthine phosphoribosyltransferase from Ectopseudomonas mendocina (strain ymp) (Pseudomonas mendocina).